The chain runs to 139 residues: Histone H3-like 5 (139 aa).

Over residues 1-10 (MARTKQTARI) the composition is skewed to polar residues. The tract at residues 1–43 (MARTKQTARISTGGKAPRKQLAPKAARQSAPATGGVKKPHRFR) is disordered. N6,N6,N6-trimethyllysine; alternate is present on K5. Position 5 is an N6,N6-dimethyllysine; alternate (K5). An N6-methyllysine; alternate modification is found at K5. Residue S11 is modified to Phosphoserine. T12 is modified (phosphothreonine). K15 is modified (N6-acetyllysine). K19 and K24 each carry N6-methyllysine; alternate. N6-acetyllysine; alternate occurs at positions 19 and 24. A Phosphoserine modification is found at S29. K37 carries the post-translational modification N6,N6,N6-trimethyllysine; alternate. The residue at position 37 (K37) is an N6,N6-dimethyllysine; alternate. K37 carries the N6-methyllysine; alternate modification.

Belongs to the histone H3 family. As to quaternary structure, the nucleosome is a histone octamer containing two molecules each of H2A, H2B, H3 and H4 assembled in one H3-H4 heterotetramer and two H2A-H2B heterodimers. The octamer wraps approximately 147 bp of DNA.

It is found in the nucleus. The protein localises to the chromosome. Core component of nucleosome. Nucleosomes wrap and compact DNA into chromatin, limiting DNA accessibility to the cellular machineries which require DNA as a template. Histones thereby play a central role in transcription regulation, DNA repair, DNA replication and chromosomal stability. DNA accessibility is regulated via a complex set of post-translational modifications of histones, also called histone code, and nucleosome remodeling. This Arabidopsis thaliana (Mouse-ear cress) protein is Histone H3-like 5.